The sequence spans 265 residues: Speedy protein E12 (265 aa).

The segment at 1–80 (MGQILGKIMM…EPEKELAPEP (80 aa)) is disordered. Residues 13–23 (QPQPQEEQSPQ) are compositionally biased toward low complexity. The segment covering 66-80 (DESDDEPEKELAPEP) has biased composition (acidic residues).

Belongs to the Speedy/Ringo family.

The chain is Speedy protein E12 from Homo sapiens (Human).